A 395-amino-acid chain; its full sequence is Phosphoglycerate kinase (395 aa).

Substrate is bound by residues 22-24, Arg-37, 60-63, Arg-116, and Arg-149; these read DLN and HFGR. ATP-binding positions include Lys-199, Glu-322, and 352 to 355; that span reads GGDT.

It belongs to the phosphoglycerate kinase family. In terms of assembly, monomer.

It is found in the cytoplasm. It carries out the reaction (2R)-3-phosphoglycerate + ATP = (2R)-3-phospho-glyceroyl phosphate + ADP. It participates in carbohydrate degradation; glycolysis; pyruvate from D-glyceraldehyde 3-phosphate: step 2/5. The polypeptide is Phosphoglycerate kinase (Novosphingobium aromaticivorans (strain ATCC 700278 / DSM 12444 / CCUG 56034 / CIP 105152 / NBRC 16084 / F199)).